A 347-amino-acid chain; its full sequence is GMP reductase (347 aa).

Position 108–131 (108–131) interacts with NADP(+); the sequence is ADFEKTVQILALNPALNFVCIDVA. K(+) contacts are provided by glycine 181 and glycine 183. Cysteine 186 serves as the catalytic Thioimidate intermediate. Residue 216 to 239 coordinates NADP(+); it reads IVSDGGCTMPGDVAKAFGGGADFV.

It belongs to the IMPDH/GMPR family. GuaC type 1 subfamily. In terms of assembly, homotetramer.

It carries out the reaction IMP + NH4(+) + NADP(+) = GMP + NADPH + 2 H(+). In terms of biological role, catalyzes the irreversible NADPH-dependent deamination of GMP to IMP. It functions in the conversion of nucleobase, nucleoside and nucleotide derivatives of G to A nucleotides, and in maintaining the intracellular balance of A and G nucleotides. In Salmonella paratyphi C (strain RKS4594), this protein is GMP reductase.